The chain runs to 20 residues: Elastase (20 aa).

In terms of domain architecture, Peptidase S1 spans 1–20; it reads VVGGEVARAHSWPWQISLQY.

The protein belongs to the peptidase S1 family. Elastase subfamily.

Functionally, digests most rapidly at the C-terminal side of alanine residues, but also cleaves at valine and leucine residues. The chain is Elastase from Gadus morhua (Atlantic cod).